The chain runs to 249 residues: Metal-staphylopine import system ATP-binding protein CntF (249 aa).

The 243-residue stretch at 2–244 (IKIKDVEKSY…DNAYTRELIE (243 aa)) folds into the ABC transporter domain. Residue 42-49 (GESGSGKS) participates in ATP binding.

Belongs to the ABC transporter superfamily. The complex is composed of two ATP-binding proteins (CntD and CntF), two transmembrane proteins (CntB and CntC) and a solute-binding protein (CntA).

The protein resides in the cell membrane. Its activity is regulated as follows. Nickel/cobalt import is reduced in the presence of zinc. Its function is as follows. Part of the ABC transporter complex CntABCDF (Opp1) involved in the uptake of metal in complex with the metallophore staphylopine (StP). Involved in the import of divalent metals ions such as nickel, cobalt and zinc. Probably responsible for energy coupling to the transport system. Plays a major role in nickel/cobalt import in zinc-depleted conditions. Contributes to virulence. Required for full urease activity in vitro. This Staphylococcus aureus (strain NCTC 8325 / PS 47) protein is Metal-staphylopine import system ATP-binding protein CntF.